We begin with the raw amino-acid sequence, 189 residues long: Tumor protein p53-inducible protein 11 (189 aa).

Residues 1 to 63 (MAAKQPPPLM…FAVREPLGLR (63 aa)) are Cytoplasmic-facing. Ser-14 carries the post-translational modification Phosphoserine. Residues 64–84 (VWQFLSAMLFSSVAIMALALP) traverse the membrane as a helical segment. At 85–108 (DQLYDAVFDGAEVTSKTPIRLYGG) the chain is on the extracellular side. Residues 109 to 129 (ALLSISLIMWNALYTAEKVII) form a helical membrane-spanning segment. Residue Arg-130 is a topological domain, cytoplasmic. A helical membrane pass occupies residues 131 to 151 (WTLLTEACYFGVQSLVVTATL). The Extracellular portion of the chain corresponds to 152–155 (AETG). Residues 156-176 (LMSLGTLLLLASRLLFVIVSI) traverse the membrane as a helical segment. Over 177–189 (YYYYQVGRKPKKV) the chain is Cytoplasmic.

It localises to the membrane. In Rattus norvegicus (Rat), this protein is Tumor protein p53-inducible protein 11 (Tp53i11).